Reading from the N-terminus, the 386-residue chain is Heat-inducible transcription repressor HrcA (386 aa).

This sequence belongs to the HrcA family.

Its function is as follows. Negative regulator of class I heat shock genes (grpE-dnaK-dnaJ and groELS operons). Prevents heat-shock induction of these operons. The chain is Heat-inducible transcription repressor HrcA from Chlamydia caviae (strain ATCC VR-813 / DSM 19441 / 03DC25 / GPIC) (Chlamydophila caviae).